We begin with the raw amino-acid sequence, 210 residues long: Tissue inhibitor of metalloproteinase (210 aa).

Positions 1-27 (MDLRKHLGLLTLLLVAVFAFYGRPADA) are cleaved as a signal peptide. Cysteine 28 lines the Zn(2+) pocket. Involved in metalloproteinase-binding stretches follow at residues 28–31 (CSCM) and 93–94 (DA). 5 cysteine pairs are disulfide-bonded: cysteine 28-cysteine 96, cysteine 30-cysteine 118, cysteine 145-cysteine 195, cysteine 150-cysteine 155, and cysteine 165-cysteine 180. In terms of domain architecture, NTR spans 28–145 (CSCMPSHPQT…SGGYAKATNC (118 aa)).

This sequence belongs to the protease inhibitor I35 (TIMP) family. In terms of tissue distribution, expressed in heads of female and male adult flies. Expressed at the time of eclosion in unopened wings of adult flies. Strongly expressed at the tip of ovarian germarium region 1 where germline stem cells (GSCs) and cystoblasts reside and in region 2 of the germarium.

Its subcellular location is the secreted. Metalloproteinase inhibitor that acts on both matrix metalloproteinases Mmp1 and Mmp2 in vitro. Complexes with metalloproteinases and irreversibly inactivates them by binding to their catalytic zinc cofactor. Required for wing maturation which is the final step in morphogenesis of the adult fly. Involved in the negative regulation of developmental tissue invasion for imaginal disk eversion during metamorphosis by inhibiting Mmp-mediated basement membrane (BM) degradation. Required for oogenesis and for the long-term maintainance of germarial structure and shape in the adult ovaries. Required for maintaining composition and biophysical properties of the extracellular matrix (ECM), and for the normal organization and cyst production of the germline stem cell (GSC) niche. The sequence is that of Tissue inhibitor of metalloproteinase from Drosophila melanogaster (Fruit fly).